The sequence spans 630 residues: tRNA uridine 5-carboxymethylaminomethyl modification enzyme MnmG (630 aa).

Position 13–18 (13–18 (GGGHAG)) interacts with FAD. 273–287 (GPRYCPSIEDKVMRF) contributes to the NAD(+) binding site.

It belongs to the MnmG family. In terms of assembly, homodimer. Heterotetramer of two MnmE and two MnmG subunits. Requires FAD as cofactor.

Its subcellular location is the cytoplasm. Its function is as follows. NAD-binding protein involved in the addition of a carboxymethylaminomethyl (cmnm) group at the wobble position (U34) of certain tRNAs, forming tRNA-cmnm(5)s(2)U34. The protein is tRNA uridine 5-carboxymethylaminomethyl modification enzyme MnmG of Actinobacillus pleuropneumoniae serotype 3 (strain JL03).